Consider the following 98-residue polypeptide: DNA/RNA-binding protein Alba (98 aa).

K16 bears the N6-acetyllysine mark.

The protein belongs to the histone-like Alba family. Post-translationally, acetylated. Acetylation at Lys-16 decreases DNA-binding affinity.

It localises to the cytoplasm. Its subcellular location is the chromosome. Its function is as follows. Binds double-stranded DNA tightly but without sequence specificity. Involved in DNA compaction. The polypeptide is DNA/RNA-binding protein Alba (Metallosphaera sedula (strain ATCC 51363 / DSM 5348 / JCM 9185 / NBRC 15509 / TH2)).